We begin with the raw amino-acid sequence, 234 residues long: Lipoprotein-releasing system ATP-binding protein LolD (234 aa).

Residues 7 to 234 (LLCNNLCKKY…QDELTVTGAL (228 aa)) form the ABC transporter domain. 43 to 50 (GSSGSGKS) contributes to the ATP binding site.

It belongs to the ABC transporter superfamily. Lipoprotein translocase (TC 3.A.1.125) family. The complex is composed of two ATP-binding proteins (LolD) and two transmembrane proteins (LolC and LolE).

The protein localises to the cell inner membrane. Its function is as follows. Part of the ABC transporter complex LolCDE involved in the translocation of mature outer membrane-directed lipoproteins, from the inner membrane to the periplasmic chaperone, LolA. Responsible for the formation of the LolA-lipoprotein complex in an ATP-dependent manner. This Photorhabdus laumondii subsp. laumondii (strain DSM 15139 / CIP 105565 / TT01) (Photorhabdus luminescens subsp. laumondii) protein is Lipoprotein-releasing system ATP-binding protein LolD.